The following is a 680-amino-acid chain: DNA-directed RNA polymerase subunit beta' (680 aa).

Zn(2+) is bound by residues Cys-69, Cys-71, Cys-87, and Cys-90. Asp-489, Asp-491, and Asp-493 together coordinate Mg(2+).

The protein belongs to the RNA polymerase beta' chain family. RpoC1 subfamily. As to quaternary structure, in plastids the minimal PEP RNA polymerase catalytic core is composed of four subunits: alpha, beta, beta', and beta''. When a (nuclear-encoded) sigma factor is associated with the core the holoenzyme is formed, which can initiate transcription. Requires Mg(2+) as cofactor. Zn(2+) is required as a cofactor.

It localises to the plastid. It is found in the chloroplast. The enzyme catalyses RNA(n) + a ribonucleoside 5'-triphosphate = RNA(n+1) + diphosphate. Its function is as follows. DNA-dependent RNA polymerase catalyzes the transcription of DNA into RNA using the four ribonucleoside triphosphates as substrates. This chain is DNA-directed RNA polymerase subunit beta', found in Manihot esculenta (Cassava).